Reading from the N-terminus, the 207-residue chain is Ribosome maturation factor RimP (207 aa).

The protein belongs to the RimP family.

Its subcellular location is the cytoplasm. In terms of biological role, required for maturation of 30S ribosomal subunits. This Parvibaculum lavamentivorans (strain DS-1 / DSM 13023 / NCIMB 13966) protein is Ribosome maturation factor RimP.